We begin with the raw amino-acid sequence, 1210 residues long: MRPSGTAGAALLALLAALCPASRALEEKKVCQGTSNKLTQLGTFEDHFLSLQRMFNNCEVVLGNLEITYVQRNYDLSFLKTIQEVAGYVLIALNTVERIPLENLQIIRGNMYYENSYALAVLSNYDANKTGLKELPMRNLQEILHGAVRFSNNPALCNVESIQWRDIVSSDFLSNMSMDFQNHLGSCQKCDPSCPNGSCWGAGEENCQKLTKIICAQQCSGRCRGKSPSDCCHNQCAAGCTGPRESDCLVCRKFRDEATCKDTCPPLMLYNPTTYQMDVNPEGKYSFGATCVKKCPRNYVVTDHGSCVRACGADSYEMEEDGVRKCKKCEGPCRKVCNGIGIGEFKDSLSINATNIKHFKNCTSISGDLHILPVAFRGDSFTHTPPLDPQELDILKTVKEITGFLLIQAWPENRTDLHAFENLEIIRGRTKQHGQFSLAVVSLNITSLGLRSLKEISDGDVIISGNKNLCYANTINWKKLFGTSGQKTKIISNRGENSCKATGQVCHALCSPEGCWGPEPRDCVSCRNVSRGRECVDKCNLLEGEPREFVENSECIQCHPECLPQAMNITCTGRGPDNCIQCAHYIDGPHCVKTCPAGVMGENNTLVWKYADAGHVCHLCHPNCTYGCTGPGLEGCPTNGPKIPSIATGMVGALLLLLVVALGIGLFMRRRHIVRKRTLRRLLQERELVEPLTPSGEAPNQALLRILKETEFKKIKVLGSGAFGTVYKGLWIPEGEKVKIPVAIKELREATSPKANKEILDEAYVMASVDNPHVCRLLGICLTSTVQLITQLMPFGCLLDYVREHKDNIGSQYLLNWCVQIAKGMNYLEDRRLVHRDLAARNVLVKTPQHVKITDFGLAKLLGAEEKEYHAEGGKVPIKWMALESILHRIYTHQSDVWSYGVTVWELMTFGSKPYDGIPASEISSILEKGERLPQPPICTIDVYMIMVKCWMIDADSRPKFRELIIEFSKMARDPQRYLVIQGDERMHLPSPTDSNFYRALMDEEDMDDVVDADEYLIPQQGFFSSPSTSRTPLLSSLSATSNNSTVACIDRNGLQSCPIKEDSFLQRYSSDPTGALTEDSIDDTFLPVPEYINQSVPKRPAGSVQNPVYHNQPLNPAPSRDPHYQDPHSTAVGNPEYLNTVQPTCVNSTFDSPAHWAQKGSHQISLDNPDYQQDFFPKEAKPNGIFKGSTAENAEYLRVAPQSSEFIGA.

An N-terminal signal peptide occupies residues 1 to 24; it reads MRPSGTAGAALLALLAALCPASRA. The Extracellular segment spans residues 25–645; it reads LEEKKVCQGT…CPTNGPKIPS (621 aa). Residues cysteine 31 and cysteine 58 are joined by a disulfide bond. Asparagine 56 carries N-linked (GlcNAc...) (complex) asparagine; atypical; partial glycosylation. An N-linked (GlcNAc...) asparagine; atypical glycan is attached at asparagine 73. Residues 75–300 form an Approximate repeat; the sequence is DLSFLKTIQE…CVKKCPRNYV (226 aa). 3 N-linked (GlcNAc...) asparagine glycosylation sites follow: asparagine 128, asparagine 175, and asparagine 196. Disulfide bonds link cysteine 157-cysteine 187, cysteine 190-cysteine 199, cysteine 194-cysteine 207, cysteine 215-cysteine 223, cysteine 219-cysteine 231, cysteine 232-cysteine 240, cysteine 236-cysteine 248, cysteine 251-cysteine 260, cysteine 264-cysteine 291, cysteine 295-cysteine 307, cysteine 311-cysteine 326, cysteine 329-cysteine 333, and cysteine 337-cysteine 362. Phosphoserine is present on serine 229. 4 N-linked (GlcNAc...) asparagine glycosylation sites follow: asparagine 352, asparagine 361, asparagine 413, and asparagine 444. The stretch at 390–600 is one Approximate repeat; sequence QELDILKTVK…CVKTCPAGVM (211 aa). 11 cysteine pairs are disulfide-bonded: cysteine 470–cysteine 499, cysteine 506–cysteine 515, cysteine 510–cysteine 523, cysteine 526–cysteine 535, cysteine 539–cysteine 555, cysteine 558–cysteine 571, cysteine 562–cysteine 579, cysteine 582–cysteine 591, cysteine 595–cysteine 617, cysteine 620–cysteine 628, and cysteine 624–cysteine 636. N-linked (GlcNAc...) asparagine glycosylation is present at asparagine 528. Residue asparagine 568 is glycosylated (N-linked (GlcNAc...) asparagine; partial). N-linked (GlcNAc...) asparagine; partial glycosylation is present at asparagine 603. The N-linked (GlcNAc...) (high mannose) asparagine glycan is linked to asparagine 623. A helical membrane pass occupies residues 646–668; sequence IATGMVGALLLLLVVALGIGLFM. Residues 669-1210 are Cytoplasmic-facing; that stretch reads RRRHIVRKRT…APQSSEFIGA (542 aa). Position 678 is a phosphothreonine; by PKC and PKD/PRKD1 (threonine 678). The tract at residues 688 to 704 is important for dimerization, phosphorylation and activation; sequence LVEPLTPSGEAPNQALL. Phosphothreonine; by PKD/PRKD1 is present on threonine 693. Serine 695 is modified (phosphoserine). In terms of domain architecture, Protein kinase spans 712-979; sequence FKKIKVLGSG…KMARDPQRYL (268 aa). A Glycyl lysine isopeptide (Lys-Gly) (interchain with G-Cter in ubiquitin) cross-link involves residue lysine 716. 718-726 lines the ATP pocket; the sequence is LGSGAFGTV. Lysine 737 participates in a covalent cross-link: Glycyl lysine isopeptide (Lys-Gly) (interchain with G-Cter in ubiquitin). Lysine 745 contributes to the ATP binding site. At lysine 745 the chain carries N6-(2-hydroxyisobutyryl)lysine. Residues lysine 754 and lysine 757 each participate in a glycyl lysine isopeptide (Lys-Gly) (interchain with G-Cter in ubiquitin) cross-link. ATP is bound at residue 790–791; sequence TQ. The active-site Proton acceptor is aspartate 837. Aspartate 855 lines the ATP pocket. Residue lysine 867 forms a Glycyl lysine isopeptide (Lys-Gly) (interchain with G-Cter in ubiquitin) linkage. Residue tyrosine 869 is modified to Phosphotyrosine. Glycyl lysine isopeptide (Lys-Gly) (interchain with G-Cter in ubiquitin) cross-links involve residues lysine 929, lysine 960, and lysine 970. Phosphoserine occurs at positions 991 and 995. A phosphotyrosine; by autocatalysis mark is found at tyrosine 998 and tyrosine 1016. 2 positions are modified to phosphoserine: serine 1026 and serine 1039. A Phosphothreonine modification is found at threonine 1041. Serine 1042 carries the post-translational modification Phosphoserine. A lipid anchor (S-palmitoyl cysteine) is attached at cysteine 1049. A Phosphoserine modification is found at serine 1064. Tyrosine 1069 is modified (phosphotyrosine). Serine 1070, serine 1071, and serine 1081 each carry phosphoserine. A phosphotyrosine; by autocatalysis mark is found at tyrosine 1092 and tyrosine 1110. Residues 1097–1137 form a disordered region; that stretch reads VPKRPAGSVQNPVYHNQPLNPAPSRDPHYQDPHSTAVGNPE. 2 stretches are compositionally biased toward polar residues: residues 1104 to 1115 and 1128 to 1137; these read SVQNPVYHNQPL and PHSTAVGNPE. Cysteine 1146 carries S-palmitoyl cysteine lipidation. Position 1166 is a phosphoserine (serine 1166). Residues tyrosine 1172 and tyrosine 1197 each carry the phosphotyrosine; by autocatalysis modification. At arginine 1199 the chain carries Omega-N-methylarginine.

This sequence belongs to the protein kinase superfamily. Tyr protein kinase family. EGF receptor subfamily. In terms of assembly, binding of the ligand triggers homo- and/or heterodimerization of the receptor triggering its autophosphorylation. Heterodimer with ERBB2. Forms a complex with CCDC88A/GIV (via SH2-like regions) and GNAI3 which leads to enhanced EGFR signaling and triggering of cell migration; binding to CCDC88A requires autophosphorylation of the EGFR C-terminal region, and ligand stimulation is required for recruitment of GNAI3 to the complex. Interacts with ERRFI1; inhibits dimerization of the kinase domain and autophosphorylation. Part of a complex with ERBB2 and either PIK3C2A or PIK3C2B. Interacts with GRB2; an adapter protein coupling the receptor to downstream signaling pathways. Interacts with GAB2; involved in signaling downstream of EGFR. Interacts with STAT3; mediates EGFR downstream signaling in cell proliferation. Interacts with RIPK1; involved in NF-kappa-B activation. Interacts (autophosphorylated) with CBL, CBLB and CBLC; involved in EGFR ubiquitination and regulation; interaction with CBL is reduced in the presence of tensin TNS4. Interacts with SOCS5; regulates EGFR degradation through ELOC- and ELOB-mediated ubiquitination and proteasomal degradation. Interacts with PRMT5; methylates EGFR and enhances interaction with PTPN6. Interacts (phosphorylated) with PTPN6; inhibits EGFR-dependent activation of MAPK/ERK. Interacts with COPG1; essential for regulation of EGF-dependent nuclear transport of EGFR by retrograde trafficking from the Golgi to the ER. Interacts with TNK2; this interaction is dependent on EGF stimulation and kinase activity of EGFR. Interacts with PCNA; positively regulates PCNA. Interacts with PELP1. Interacts with MUC1. Interacts with AP2M1. Interacts with FER. May interact with EPS8; mediates EPS8 phosphorylation. Interacts (via SH2 domains) with GRB2, NCK1 and NCK2. Interacts with ATXN2. Interacts with GAREM1. Interacts (ubiquitinated) with ANKRD13A/B/D; the interaction is direct and may regulate EGFR internalization after EGF stimulation. Interacts with GPER1; the interaction occurs in an estrogen-dependent manner. Interacts (via C-terminal cytoplasmic kinase domain) with ZPR1 (via zinc fingers). Interacts with RNF115 and RNF126. Interacts with GPRC5A (via its transmembrane domain). Interacts with FAM83B; positively regulates EGFR inducing its autophosphorylation in absence of stimulation by EGF. Interacts with LAPTM4B; positively correlates with EGFR activation. Interacts with STX19. Interacts with CD44. Interacts with PGRMC1; the interaction requires PGRMC1 homodimerization. Interacts with PIKFYVE. Interacts with NEU3. Interacts with TRAF4. Interacts with the ant venom OMEGA-myrmeciitoxin(02)-Mg1a. Interacts with CD82; this interaction facilitates ligand-induced endocytosis of the receptor and its subsequent desensitization. Post-translationally, phosphorylated on Tyr residues in response to EGF. Phosphorylation at Ser-695 is partial and occurs only if Thr-693 is phosphorylated. Phosphorylation at Thr-678 and Thr-693 by PRKD1 inhibits EGF-induced MAPK8/JNK1 activation. Dephosphorylation by PTPRJ prevents endocytosis and stabilizes the receptor at the plasma membrane. Autophosphorylation at Tyr-1197 is stimulated by methylation at Arg-1199 and enhances interaction with PTPN6. Autophosphorylation at Tyr-1092 and/or Tyr-1110 recruits STAT3. Dephosphorylated by PTPN1 and PTPN2. In terms of processing, monoubiquitinated and polyubiquitinated upon EGF stimulation; which does not affect tyrosine kinase activity or signaling capacity but may play a role in lysosomal targeting. Polyubiquitin linkage is mainly through 'Lys-63', but linkage through 'Lys-48', 'Lys-11' and 'Lys-29' also occurs. Deubiquitination by OTUD7B prevents degradation. Ubiquitinated by RNF115 and RNF126. Ubiquitinated by ZNRF1 or CBL at different lysines in response to EGF stimulation; leading to recruitment of the ESCRT machinery and subsequent degradation in the lysosomes. Deubiquitinated by UCHL1 leading to the inhibition of its degradation. Palmitoylated on Cys residues by ZDHHC20. Palmitoylation inhibits internalization after ligand binding, and increases the persistence of tyrosine-phosphorylated EGFR at the cell membrane. Palmitoylation increases the amplitude and duration of EGFR signaling. Post-translationally, methylated. Methylation at Arg-1199 by PRMT5 stimulates phosphorylation at Tyr-1197. As to expression, ubiquitously expressed. Isoform 2 is also expressed in ovarian cancers.

Its subcellular location is the cell membrane. It is found in the endoplasmic reticulum membrane. It localises to the golgi apparatus membrane. The protein localises to the nucleus membrane. The protein resides in the endosome. Its subcellular location is the endosome membrane. It is found in the nucleus. It localises to the secreted. It catalyses the reaction L-tyrosyl-[protein] + ATP = O-phospho-L-tyrosyl-[protein] + ADP + H(+). Its activity is regulated as follows. Endocytosis and inhibition of the activated EGFR by phosphatases like PTPRJ and PTPRK constitute immediate regulatory mechanisms. Upon EGF-binding phosphorylates EPS15 that regulates EGFR endocytosis and activity. Moreover, inducible feedback inhibitors including LRIG1, SOCS4, SOCS5 and ERRFI1 constitute alternative regulatory mechanisms for the EGFR signaling. Up-regulated by NEU3-mediated desialylation of N-linked glycan at Asn-528. Functionally, receptor tyrosine kinase binding ligands of the EGF family and activating several signaling cascades to convert extracellular cues into appropriate cellular responses. Known ligands include EGF, TGFA/TGF-alpha, AREG, epigen/EPGN, BTC/betacellulin, epiregulin/EREG and HBEGF/heparin-binding EGF. Ligand binding triggers receptor homo- and/or heterodimerization and autophosphorylation on key cytoplasmic residues. The phosphorylated receptor recruits adapter proteins like GRB2 which in turn activates complex downstream signaling cascades. Activates at least 4 major downstream signaling cascades including the RAS-RAF-MEK-ERK, PI3 kinase-AKT, PLCgamma-PKC and STATs modules. May also activate the NF-kappa-B signaling cascade. Also directly phosphorylates other proteins like RGS16, activating its GTPase activity and probably coupling the EGF receptor signaling to the G protein-coupled receptor signaling. Also phosphorylates MUC1 and increases its interaction with SRC and CTNNB1/beta-catenin. Positively regulates cell migration via interaction with CCDC88A/GIV which retains EGFR at the cell membrane following ligand stimulation, promoting EGFR signaling which triggers cell migration. Plays a role in enhancing learning and memory performance. Plays a role in mammalian pain signaling (long-lasting hypersensitivity). Isoform 2 may act as an antagonist of EGF action. In terms of biological role, (Microbial infection) Acts as a receptor for hepatitis C virus (HCV) in hepatocytes and facilitates its cell entry. Mediates HCV entry by promoting the formation of the CD81-CLDN1 receptor complexes that are essential for HCV entry and by enhancing membrane fusion of cells expressing HCV envelope glycoproteins. This Homo sapiens (Human) protein is Epidermal growth factor receptor.